The chain runs to 143 residues: uncharacterized protein (143 aa).

4 consecutive transmembrane segments (helical) span residues Leu-7–Val-29, Phe-52–Leu-74, Leu-87–Gly-105, and Trp-120–Gly-142.

The protein localises to the cell membrane. This is an uncharacterized protein from Aquifex aeolicus (strain VF5).